The sequence spans 315 residues: Olfactory receptor 3A1 (315 aa).

The Extracellular portion of the chain corresponds to 1-28 (MQPESGANGTVIAEFILLGLLEAPGLQP). Asn8 is a glycosylation site (N-linked (GlcNAc...) asparagine). The helical transmembrane segment at 29–52 (VVFVLFLFAYLVTVGGNLSILAAV) threads the bilayer. At 53 to 60 (LVEPELHT) the chain is on the cytoplasmic side. Residues 61 to 82 (PMYFFLGNLSVLDVGCISVTVP) traverse the membrane as a helical segment. The Extracellular portion of the chain corresponds to 83 to 103 (SMLSRLLSRKRAVPCGACLTQ). A disulfide bond links Cys100 and Cys192. The chain crosses the membrane as a helical span at residues 104–123 (LFFFHLFVGVDCFLLIAMAY). At 124–143 (DRFLAICRPLTYSTRMSQTV) the chain is on the cytoplasmic side. The helical transmembrane segment at 144–161 (QRMLVAASWACAFTNALT) threads the bilayer. Residues 162-199 (HTVAMSTLNFCGPNVINHFYCDLPQLCQLSCSSTQLSE) lie on the Extracellular side of the membrane. Residues 200 to 223 (LLLFAVGFIMAGTSMALIVISYIH) form a helical membrane-spanning segment. The Cytoplasmic portion of the chain corresponds to 224–240 (VAAAVLRIRSVEGRKKA). A helical membrane pass occupies residues 241–264 (FSTCGSHLTVVAIFYGSGIFNYMR). Residues 265–275 (LGSTKLSDKDK) are Extracellular-facing. A helical membrane pass occupies residues 276 to 295 (AVGIFNTVINPMLNPIIYSF). The Cytoplasmic segment spans residues 296-315 (RNPDVQSAIWRMLTGRRSLA).

This sequence belongs to the G-protein coupled receptor 1 family.

The protein localises to the cell membrane. In terms of biological role, odorant receptor. The polypeptide is Olfactory receptor 3A1 (OR3A1) (Gorilla gorilla gorilla (Western lowland gorilla)).